The chain runs to 305 residues: UDP-3-O-acyl-N-acetylglucosamine deacetylase (305 aa).

Zn(2+)-binding residues include histidine 78, histidine 237, and aspartate 241. The active-site Proton donor is histidine 264.

Belongs to the LpxC family. Zn(2+) serves as cofactor.

The enzyme catalyses a UDP-3-O-[(3R)-3-hydroxyacyl]-N-acetyl-alpha-D-glucosamine + H2O = a UDP-3-O-[(3R)-3-hydroxyacyl]-alpha-D-glucosamine + acetate. It participates in glycolipid biosynthesis; lipid IV(A) biosynthesis; lipid IV(A) from (3R)-3-hydroxytetradecanoyl-[acyl-carrier-protein] and UDP-N-acetyl-alpha-D-glucosamine: step 2/6. Catalyzes the hydrolysis of UDP-3-O-myristoyl-N-acetylglucosamine to form UDP-3-O-myristoylglucosamine and acetate, the committed step in lipid A biosynthesis. The chain is UDP-3-O-acyl-N-acetylglucosamine deacetylase from Paraburkholderia phymatum (strain DSM 17167 / CIP 108236 / LMG 21445 / STM815) (Burkholderia phymatum).